The sequence spans 288 residues: Oxaloacetate decarboxylase (288 aa).

Position 47 (Ser47) interacts with substrate. Residue Asp85 participates in Mg(2+) binding. Residues Arg156 and His232 each coordinate substrate.

This sequence belongs to the isocitrate lyase/PEP mutase superfamily. Oxaloacetate decarboxylase family. In terms of assembly, homotetramer; dimer of dimers. Requires Mg(2+) as cofactor.

The catalysed reaction is oxaloacetate + H(+) = pyruvate + CO2. Catalyzes the decarboxylation of oxaloacetate into pyruvate. Seems to play a role in maintaining cellular concentrations of bicarbonate and pyruvate. The chain is Oxaloacetate decarboxylase from Rhodopseudomonas palustris (strain BisB18).